The primary structure comprises 1007 residues: Serine/threonine-protein kinase PRP4 homolog (1007 aa).

The segment at 1–104 (MAATEPPSLR…PAKRTKLDDL (104 aa)) is disordered. Alanine 2 is modified (N-acetylalanine). A phosphoserine mark is found at serine 8, serine 21, serine 24, and serine 33. Basic residues-rich tracts occupy residues 40 to 60 (KHSR…KHKH) and 68 to 82 (KKHK…HKRK). Basic and acidic residues predominate over residues 83–92 (EVLDASDKEG). Phosphoserine is present on residues serine 88 and serine 94. Residue lysine 100 is modified to N6-acetyllysine; alternate. Lysine 100 is covalently cross-linked (Glycyl lysine isopeptide (Lys-Gly) (interchain with G-Cter in SUMO2); alternate). Lysine 112 is covalently cross-linked (Glycyl lysine isopeptide (Lys-Gly) (interchain with G-Cter in SUMO2)). A Glycyl lysine isopeptide (Lys-Gly) (interchain with G-Cter in SUMO2); alternate cross-link involves residue lysine 118. Lysine 118 is covalently cross-linked (Glycyl lysine isopeptide (Lys-Gly) (interchain with G-Cter in SUMO1); alternate). Serine 132 carries the phosphoserine modification. Tyrosine 141 is subject to Phosphotyrosine. Disordered regions lie at residues 141 to 535 (YESG…EDEE) and 560 to 583 (NISV…SPDD). A phosphoserine mark is found at serine 143, serine 145, and serine 167. Residues 158-169 (GNRSSTRSSSTR) are compositionally biased toward low complexity. Residues lysine 171 and lysine 178 each participate in a glycyl lysine isopeptide (Lys-Gly) (interchain with G-Cter in SUMO2) cross-link. Composition is skewed to basic residues over residues 180–203 (SAKK…RKSK) and 215–231 (RSKS…SKRS). Residues serine 240, serine 242, serine 258, serine 278, serine 292, and serine 294 each carry the phosphoserine modification. Positions 248–271 (RSQEKVGKARSPADEKIKSEEKGK) are enriched in basic and acidic residues. Residues 294 to 303 (SPVDLRDKSK) show a composition bias toward basic and acidic residues. Over residues 304 to 315 (DRRSRSKERKSK) the composition is skewed to basic residues. The segment covering 316–325 (RSEIDKEKKP) has biased composition (basic and acidic residues). A phosphoserine mark is found at serine 328, serine 354, serine 356, serine 366, and serine 368. The span at 342–367 (PSRRPGRSPKRRSLSPKQRDKSRRSR) shows a compositional bias: basic residues. Threonine 385 is subject to Phosphothreonine. A Phosphoserine modification is found at serine 387. Basic and acidic residues-rich tracts occupy residues 395–408 (RSLE…ERRR) and 415–429 (RPRD…RSKD). Residues serine 427, serine 431, and serine 437 each carry the phosphoserine modification. Residues 438–497 (PSRRRSRSPIRRRSRSPLRRSRSPRRRSRSPRRRDRSRRSRSRLRRRSRSRGGHRRRSRS) are compositionally biased toward basic residues. Residues serine 518, serine 519, serine 520, serine 565, serine 569, serine 576, serine 578, and serine 580 each carry the phosphoserine modification. Over residues 518-535 (SSSDDNLEDFDVEEEDEE) the composition is skewed to acidic residues. Low complexity predominate over residues 562-581 (SVPSEPSSPQSSTRSRSPSP). Glycyl lysine isopeptide (Lys-Gly) (interchain with G-Cter in SUMO2) cross-links involve residues lysine 593 and lysine 659. The region spanning 687–1003 (YNVYGYTGQG…INQALQHAFI (317 aa)) is the Protein kinase domain. Residues 693–701 (TGQGVFSNV) and lysine 717 each bind ATP. Position 717 is an N6-acetyllysine (lysine 717). Aspartate 815 (proton acceptor) is an active-site residue. Tyrosine 849 is subject to Phosphotyrosine. The residue at position 852 (serine 852) is a Phosphoserine.

The protein belongs to the protein kinase superfamily. CMGC Ser/Thr protein kinase family. As to quaternary structure, interacts with CLK1 C-terminus. Associates with the U5 snRNP and NCOR1 deacetylase complexes. Identified in the spliceosome C complex. In terms of processing, phosphorylated by CLK1. Autophosphorylated; phosphorylation inhibits interaction with its targets, such as PRPF6 or SMARCA4.

Its subcellular location is the nucleus. The protein resides in the chromosome. The protein localises to the centromere. It is found in the kinetochore. The catalysed reaction is L-seryl-[protein] + ATP = O-phospho-L-seryl-[protein] + ADP + H(+). It carries out the reaction L-threonyl-[protein] + ATP = O-phospho-L-threonyl-[protein] + ADP + H(+). In terms of biological role, serine/threonine kinase involved in spliceosomal assembly as well as mitosis and signaling regulation. Connects chromatin mediated regulation of transcription and pre-mRNA splicing. During spliceosomal assembly, interacts with and phosphorylates PRPF6 and PRPF31, components of the U4/U6-U5 tri-small nuclear ribonucleoprotein (snRNP), to facilitate the formation of the spliceosome B complex. Plays a role in regulating transcription and the spindle assembly checkpoint (SAC). Associates with U5 snRNP and NCOR1 deacetylase complexes which may allow a coordination of pre-mRNA splicing with chromatin remodeling events involved in transcriptional regulation. Associates and probably phosphorylates SMARCA4 and NCOR1. Phosphorylates SRSF1. Associates with kinetochores during mitosis and is necessary for recruitment and maintenance of the checkpoint proteins such as MAD1L1 and MAD12L1 at the kinetochores. Phosphorylates and regulates the activity of the transcription factors such as ELK1 and KLF13. Phosphorylates nuclear YAP1 and WWTR1/TAZ which induces nuclear exclusion and regulates Hippo signaling pathway, involved in tissue growth control. This is Serine/threonine-protein kinase PRP4 homolog (Prp4k) from Rattus norvegicus (Rat).